The primary structure comprises 149 residues: Vesicle-associated protein 3-1 (149 aa).

Position 1 is an N-acetylmethionine (Met1). Ser2 carries the N-acetylserine; in Vesicle-associated protein 3-1, N-terminally processed modification. An MSP domain is found at 6-126 (LLEIEPMYLQ…EETKLRVTYV (121 aa)).

The protein belongs to the VAMP-associated protein (VAP) (TC 9.B.17) family.

In terms of biological role, may play a role in vesicle trafficking. This is Vesicle-associated protein 3-1 (PVA31) from Arabidopsis thaliana (Mouse-ear cress).